Consider the following 92-residue polypeptide: Small nuclear ribonucleoprotein E (92 aa).

A Sm domain is found at Ile-18–Asn-92.

The protein belongs to the snRNP Sm proteins family. As to quaternary structure, core component of the spliceosomal U1, U2, U4 and U5 small nuclear ribonucleoproteins (snRNPs), the building blocks of the spliceosome. Most spliceosomal snRNPs contain a common set of Sm proteins, SNRPB, SNRPD1, SNRPD2, SNRPD3, SNRPE, SNRPF and SNRPG that assemble in a heptameric protein ring on the Sm site of the small nuclear RNA to form the core snRNP. Component of the U1 snRNP. The U1 snRNP is composed of the U1 snRNA and the 7 core Sm proteins SNRPB, SNRPD1, SNRPD2, SNRPD3, SNRPE, SNRPF and SNRPG, and at least three U1 snRNP-specific proteins SNRNP70/U1-70K, SNRPA/U1-A and SNRPC/U1-C. Component of the U4/U6-U5 tri-snRNP complex composed of the U4, U6 and U5 snRNAs and at least PRPF3, PRPF4, PRPF6, PRPF8, PRPF31, SNRNP200, TXNL4A, SNRNP40, SNRPB, SNRPD1, SNRPD2, SNRPD3, SNRPE, SNRPF, SNRPG, DDX23, CD2BP2, PPIH, SNU13, EFTUD2, SART1 and USP39, plus LSM2, LSM3, LSM4, LSM5, LSM6, LSM7 and LSM8. Component of the U7 snRNP complex, or U7 Sm protein core complex, that is composed of the U7 snRNA and at least LSM10, LSM11, SNRPB, SNRPD3, SNRPE, SNRPF and SNRPG; the complex does not contain SNRPD1 and SNRPD2. Component of the minor spliceosome, which splices U12-type introns. Part of the SMN-Sm complex that contains SMN1, GEMIN2/SIP1, DDX20/GEMIN3, GEMIN4, GEMIN5, GEMIN6, GEMIN7, GEMIN8, STRAP/UNRIP and the Sm proteins SNRPB, SNRPD1, SNRPD2, SNRPD3, SNRPE, SNRPF and SNRPG; catalyzes core snRNPs assembly. Forms a 6S pICln-Sm complex composed of CLNS1A/pICln, SNRPD1, SNRPD2, SNRPE, SNRPF and SNRPG; ring-like structure where CLNS1A/pICln mimics additional Sm proteins and which is unable to assemble into the core snRNP. Interacts with SMN1; the interaction is direct. Interacts with GEMIN2 (via N-terminus); the interaction is direct. Interacts with SNRPF; the interaction is direct. Interacts with SNRPG; the interaction is direct.

It localises to the cytoplasm. The protein localises to the cytosol. It is found in the nucleus. Functionally, plays a role in pre-mRNA splicing as a core component of the spliceosomal U1, U2, U4 and U5 small nuclear ribonucleoproteins (snRNPs), the building blocks of the spliceosome. Component of both the pre-catalytic spliceosome B complex and activated spliceosome C complexes. As a component of the minor spliceosome, involved in the splicing of U12-type introns in pre-mRNAs. As part of the U7 snRNP it is involved in histone 3'-end processing. This chain is Small nuclear ribonucleoprotein E (SNRPE), found in Sus scrofa (Pig).